Consider the following 360-residue polypeptide: GTPase Obg (360 aa).

The Obg domain occupies 1 to 156 (MFVDSVEIII…KCVRLELKLI (156 aa)). Residues 157–360 (ADIGLVGFPN…LKFVLLEALP (204 aa)) form the OBG-type G domain. Residues 163–170 (GFPNAGKS), 188–192 (FTTLV), 210–213 (DIPG), 279–282 (NKCD), and 341–343 (SAV) each bind GTP. Mg(2+) contacts are provided by Ser170 and Thr190.

This sequence belongs to the TRAFAC class OBG-HflX-like GTPase superfamily. OBG GTPase family. As to quaternary structure, monomer. Mg(2+) serves as cofactor.

Its subcellular location is the cytoplasm. Its function is as follows. An essential GTPase which binds GTP, GDP and possibly (p)ppGpp with moderate affinity, with high nucleotide exchange rates and a fairly low GTP hydrolysis rate. Plays a role in control of the cell cycle, stress response, ribosome biogenesis and in those bacteria that undergo differentiation, in morphogenesis control. This Helicobacter pylori (strain ATCC 700392 / 26695) (Campylobacter pylori) protein is GTPase Obg.